Consider the following 256-residue polypeptide: uncharacterized protein (256 aa).

29–36 contributes to the ATP binding site; that stretch reads GDDHSGKT.

This is an uncharacterized protein from Saccharomyces cerevisiae (strain ATCC 204508 / S288c) (Baker's yeast).